A 614-amino-acid chain; its full sequence is UvrABC system protein C (614 aa).

The 78-residue stretch at 12 to 89 (DKPGVYLFRG…IKEHRPRYNV (78 aa)) folds into the GIY-YIG domain. The UVR domain maps to 198 to 233 (ADLVRGLARKMEAAAANLEFERAAELRDQLRAVEQV).

This sequence belongs to the UvrC family. As to quaternary structure, interacts with UvrB in an incision complex.

It localises to the cytoplasm. The UvrABC repair system catalyzes the recognition and processing of DNA lesions. UvrC both incises the 5' and 3' sides of the lesion. The N-terminal half is responsible for the 3' incision and the C-terminal half is responsible for the 5' incision. The protein is UvrABC system protein C of Desulforudis audaxviator (strain MP104C).